A 574-amino-acid polypeptide reads, in one-letter code: E3 ubiquitin-protein ligase TRIM23 (574 aa).

An RING-type; degenerate zinc finger spans residues 31–76 (CGVCEDVFSLQGDKVPRLLLCGHTVCHDCLTRLPLHGRAIRCPFDR). The B box-type; degenerate zinc-finger motif lies at 122 to 168 (ESIIRCDEDEAHVASVYCTVCATHLCSDCSQVTHSTKTLAKHRRVPL). A coiled-coil region spans residues 352 to 379 (RVVLAKQEITRLLETLQKQQQQFTEVAD). The segment at 390 to 574 (TFTKDNRVHI…LVAAGVLDVA (185 aa)) is ARF-like. GTP contacts are provided by residues 411 to 418 (GLDGAGKT), 454 to 458 (DVGGK), and 513 to 516 (NKQD).

The protein in the C-terminal section; belongs to the small GTPase superfamily. Arf family. As to quaternary structure, homodimer. Interacts with PSCD1. Interacts with UBE2D2. Interacts with TBK1 (via N-terminal kinase domain) and p62/SQSTM1.

Its subcellular location is the cytoplasm. The protein resides in the endomembrane system. It is found in the golgi apparatus membrane. It localises to the lysosome membrane. It catalyses the reaction S-ubiquitinyl-[E2 ubiquitin-conjugating enzyme]-L-cysteine + [acceptor protein]-L-lysine = [E2 ubiquitin-conjugating enzyme]-L-cysteine + N(6)-ubiquitinyl-[acceptor protein]-L-lysine.. Its pathway is protein modification; protein ubiquitination. Acts as an E3 ubiquitin-protein ligase. Plays an essential role in autophagy activation during viral infection. Mechanistically, activates TANK-binding kinase 1/TBK1 by facilitating its dimerization and ability to phosphorylate the selective autophagy receptor SQSTM1. In order to achieve this function, TRIM23 mediates 'Lys-27'-linked auto-ubiquitination of its ADP-ribosylation factor (ARF) domain to induce its GTPase activity and its recruitment to autophagosomes. This Mus musculus (Mouse) protein is E3 ubiquitin-protein ligase TRIM23 (Trim23).